The sequence spans 186 residues: Dual-action ribosomal maturation protein DarP (186 aa).

Belongs to the DarP family.

It is found in the cytoplasm. Its function is as follows. Member of a network of 50S ribosomal subunit biogenesis factors which assembles along the 30S-50S interface, preventing incorrect 23S rRNA structures from forming. Promotes peptidyl transferase center (PTC) maturation. The protein is Dual-action ribosomal maturation protein DarP of Proteus mirabilis (strain HI4320).